A 1385-amino-acid chain; its full sequence is Kinesin-like protein KIF15 (1385 aa).

The interval 1 to 24 is disordered; it reads MAPGCKSELRNVTNSHSNQPSNED. Residues 10 to 21 show a composition bias toward polar residues; it reads RNVTNSHSNQPS. Positions 26–363 constitute a Kinesin motor domain; sequence AIKVFVRIRP…LNFAQRAKLI (338 aa). 109-116 is a binding site for ATP; sequence GQTGSGKT. Positions 368 to 1385 form a coiled coil; the sequence is VVNEDTQGNV…NVFLKERKKE (1018 aa). At K1007 the chain carries N6-acetyllysine. A phosphoserine mark is found at S1139 and S1167. The segment at 1222-1243 is disordered; the sequence is DMKRQGESSSQSRPDSQQLKNE. The segment covering 1228–1241 has biased composition (polar residues); the sequence is ESSSQSRPDSQQLK.

The protein belongs to the TRAFAC class myosin-kinesin ATPase superfamily. Kinesin family. KLP2 subfamily. Interacts with MKI67 and TPX2. As to expression, expressed in sympathetic neurons.

The protein resides in the cytoplasm. Its subcellular location is the cytoskeleton. It localises to the spindle. Plus-end directed kinesin-like motor enzyme involved in mitotic spindle assembly. This chain is Kinesin-like protein KIF15 (Kif15), found in Rattus norvegicus (Rat).